The sequence spans 835 residues: Probable alpha-glucuronidase A (835 aa).

Positions 1–18 (MRWSFLTVLLWLVSLTGA) are cleaved as a signal peptide. N-linked (GlcNAc...) asparagine glycans are attached at residues asparagine 49, asparagine 101, asparagine 148, asparagine 221, asparagine 278, asparagine 309, asparagine 342, asparagine 460, asparagine 522, asparagine 571, asparagine 677, and asparagine 727.

This sequence belongs to the glycosyl hydrolase 67 family.

It localises to the secreted. The catalysed reaction is an alpha-D-glucuronoside + H2O = D-glucuronate + an alcohol. Its function is as follows. Alpha-glucuronidase involved in the hydrolysis of xylan, a major structural heterogeneous polysaccharide found in plant biomass representing the second most abundant polysaccharide in the biosphere, after cellulose. Releases 4-O-methylglucuronic acid from xylan. The sequence is that of Probable alpha-glucuronidase A (aguA) from Aspergillus oryzae (strain ATCC 42149 / RIB 40) (Yellow koji mold).